The primary structure comprises 922 residues: 1,4-alpha-glucan-branching enzyme 1, chloroplastic/amyloplastic (922 aa).

The N-terminal 47 residues, 1-47, are a transit peptide targeting the chloroplast; it reads MVYTISGIRFPVLPSLHKSTLRCDRRASSHSFFLKNNSSSFSRTSLY. Residues 83 to 130 are disordered; sequence LENPDITSEDAQNLEDLTMKDGNKYNIDESTSSYREVGDEKGSVTSSS. Basic and acidic residues predominate over residues 99–109; that stretch reads LTMKDGNKYNI. Residue D494 is the Nucleophile of the active site. The Proton donor role is filled by E549. Residues 870 to 922 are disordered; sequence VESEPIELSVEEAESEPIERSVEEVESETTQQSVEVESETTQQSVEVESETTQ. Over residues 897 to 922 the composition is skewed to low complexity; it reads ETTQQSVEVESETTQQSVEVESETTQ.

This sequence belongs to the glycosyl hydrolase 13 family. GlgB subfamily. Monomer. In terms of tissue distribution, expressed in roots, leaves, stipules, pods and flowers.

It is found in the plastid. The protein resides in the chloroplast. Its subcellular location is the amyloplast. It catalyses the reaction Transfers a segment of a (1-&gt;4)-alpha-D-glucan chain to a primary hydroxy group in a similar glucan chain.. Its pathway is glycan biosynthesis; starch biosynthesis. In terms of biological role, catalyzes the formation of the alpha-1,6-glucosidic linkages in starch by scission of a 1,4-alpha-linked oligosaccharide from growing alpha-1,4-glucan chains and the subsequent attachment of the oligosaccharide to the alpha-1,6 position. May preferentially transfer short chains during branching. Responsible for the synthesis of about 75% of the amylopectin found in the starch granules of mature embryos. The sequence is that of 1,4-alpha-glucan-branching enzyme 1, chloroplastic/amyloplastic (SBEI) from Pisum sativum (Garden pea).